A 64-amino-acid chain; its full sequence is Large ribosomal subunit protein bL35 (64 aa).

Residues 1–21 (MPKMKTNRGAAKRFKVKKSGK) are disordered. Positions 10-21 (AAKRFKVKKSGK) are enriched in basic residues.

This sequence belongs to the bacterial ribosomal protein bL35 family.

The polypeptide is Large ribosomal subunit protein bL35 (Nautilia profundicola (strain ATCC BAA-1463 / DSM 18972 / AmH)).